The following is a 100-amino-acid chain: Small ribosomal subunit protein uS14 (100 aa).

The protein belongs to the universal ribosomal protein uS14 family. As to quaternary structure, part of the 30S ribosomal subunit. Contacts proteins S3 and S10.

Functionally, binds 16S rRNA, required for the assembly of 30S particles and may also be responsible for determining the conformation of the 16S rRNA at the A site. The protein is Small ribosomal subunit protein uS14 of Prochlorococcus marinus (strain MIT 9313).